The sequence spans 208 residues: MSKVLFIKANDRPVEQATSVKLYEAFTKAYKETHPNDEIVELDLFAENLPYYGNDMLTAMWKAGNGIELSADEQKRADLVNKYLNQFTAADKVVFAFPMWNFTVPAVLHSYMDYLSQAGKTFKYTAEGPVGLMGDKKVALLSARGGVYSEGPMAQMEMANKYVRTILGFWGVNNVTEVIVEGHNQFQDKAAELVAAGVEKAVKLAESF.

Residue 99–102 (MWNF) coordinates FMN.

It belongs to the azoreductase type 1 family. As to quaternary structure, homodimer. It depends on FMN as a cofactor.

The catalysed reaction is 2 a quinone + NADH + H(+) = 2 a 1,4-benzosemiquinone + NAD(+). It carries out the reaction N,N-dimethyl-1,4-phenylenediamine + anthranilate + 2 NAD(+) = 2-(4-dimethylaminophenyl)diazenylbenzoate + 2 NADH + 2 H(+). Functionally, quinone reductase that provides resistance to thiol-specific stress caused by electrophilic quinones. In terms of biological role, also exhibits azoreductase activity. Catalyzes the reductive cleavage of the azo bond in aromatic azo compounds to the corresponding amines. This Brevibacillus brevis (strain 47 / JCM 6285 / NBRC 100599) protein is FMN-dependent NADH:quinone oxidoreductase.